The following is a 984-amino-acid chain: uncharacterized protein (984 aa).

This is an uncharacterized protein from Ostreid herpesvirus 1 (isolate France) (OsHV-1).